The primary structure comprises 100 residues: Glutamyl-tRNA(Gln) amidotransferase subunit C (100 aa).

The protein belongs to the GatC family. Heterotrimer of A, B and C subunits.

The enzyme catalyses L-glutamyl-tRNA(Gln) + L-glutamine + ATP + H2O = L-glutaminyl-tRNA(Gln) + L-glutamate + ADP + phosphate + H(+). It catalyses the reaction L-aspartyl-tRNA(Asn) + L-glutamine + ATP + H2O = L-asparaginyl-tRNA(Asn) + L-glutamate + ADP + phosphate + 2 H(+). Its function is as follows. Allows the formation of correctly charged Asn-tRNA(Asn) or Gln-tRNA(Gln) through the transamidation of misacylated Asp-tRNA(Asn) or Glu-tRNA(Gln) in organisms which lack either or both of asparaginyl-tRNA or glutaminyl-tRNA synthetases. The reaction takes place in the presence of glutamine and ATP through an activated phospho-Asp-tRNA(Asn) or phospho-Glu-tRNA(Gln). The protein is Glutamyl-tRNA(Gln) amidotransferase subunit C of Streptococcus pyogenes serotype M1.